A 619-amino-acid polypeptide reads, in one-letter code: Nucleolar GTP-binding protein 2 (619 aa).

Over residues 1–10 (MGTGKKEKSR) the composition is skewed to basic and acidic residues. Positions 1–24 (MGTGKKEKSRIQRQGKVTGDPKVK) are disordered. The CP-type G domain occupies 222 to 383 (WNELYKVIDS…LIDCPGIVPP (162 aa)). GTP contacts are provided by residues 332-339 (GYPNVGKS) and 376-380 (DCPGI). Residues 473-619 (PWFTPAPEKE…PPKKQRRSRK (147 aa)) are disordered. Residues 489 to 500 (MEGREGRYGEMS) are compositionally biased toward basic and acidic residues. The segment covering 536-546 (SDSDSEVEEAA) has biased composition (acidic residues). Basic and acidic residues predominate over residues 547–556 (EEKGEEKSTA). Over residues 565 to 603 (SSDEEEDGEEEGSDVEDDEEGSDLDIEGASELEESESEA) the composition is skewed to acidic residues.

This sequence belongs to the TRAFAC class YlqF/YawG GTPase family. NOG2 subfamily.

It is found in the nucleus. Its subcellular location is the nucleolus. Its function is as follows. GTPase that associates with pre-60S ribosomal subunits in the nucleolus and is required for their nuclear export and maturation. The protein is Nucleolar GTP-binding protein 2 (nog-2) of Neurospora crassa (strain ATCC 24698 / 74-OR23-1A / CBS 708.71 / DSM 1257 / FGSC 987).